Here is a 428-residue protein sequence, read N- to C-terminus: Small ribosomal subunit protein uS2m (428 aa).

Positions 30–50 (FLSQDNFTAPPPPPTNSKKQA) are disordered.

It belongs to the universal ribosomal protein uS2 family. As to quaternary structure, component of the mitochondrial small ribosomal subunit (mt-SSU). Mature N.crassa 74S mitochondrial ribosomes consist of a small (37S) and a large (54S) subunit. The 37S small subunit contains a 16S ribosomal RNA (16S mt-rRNA) and 32 different proteins. The 54S large subunit contains a 23S rRNA (23S mt-rRNA) and 42 different proteins.

The protein resides in the mitochondrion. Functionally, component of the mitochondrial ribosome (mitoribosome), a dedicated translation machinery responsible for the synthesis of mitochondrial genome-encoded proteins, including at least some of the essential transmembrane subunits of the mitochondrial respiratory chain. The mitoribosomes are attached to the mitochondrial inner membrane and translation products are cotranslationally integrated into the membrane. The chain is Small ribosomal subunit protein uS2m (mrp4) from Neurospora crassa (strain ATCC 24698 / 74-OR23-1A / CBS 708.71 / DSM 1257 / FGSC 987).